Reading from the N-terminus, the 167-residue chain is Signal peptidase complex catalytic subunit SEC11 (167 aa).

Residues 1–12 (MNLRLELTRFLK) are Cytoplasmic-facing. A helical; Signal-anchor for type II membrane protein membrane pass occupies residues 13–30 (LCFVLSSAFMFWKGLSIA). Residues 31-167 (TNSHSPIVVV…LGISALLSNE (137 aa)) lie on the Lumenal side of the membrane. Active-site charge relay system residues include serine 44, histidine 83, and aspartate 109. Positions 153–164 (ALMGFLGISALL) are C-terminal short (CTS) helix.

It belongs to the peptidase S26B family. Component of the signal peptidase complex (SPC) composed of a catalytic subunit SEC11 and three accessory subunits SPC1, SPC2 and SPC3. The complex induces a local thinning of the ER membrane which is used to measure the length of the signal peptide (SP) h-region of protein substrates. This ensures the selectivity of the complex towards h-regions shorter than 18-20 amino acids. SPC associates with the translocon complex.

The protein resides in the endoplasmic reticulum membrane. The catalysed reaction is Cleavage of hydrophobic, N-terminal signal or leader sequences from secreted and periplasmic proteins.. Its function is as follows. Catalytic component of the signal peptidase complex (SPC) which catalyzes the cleavage of N-terminal signal sequences from nascent proteins as they are translocated into the lumen of the endoplasmic reticulum. Specifically cleaves N-terminal signal peptides that contain a hydrophobic alpha-helix (h-region) shorter than 18-20 amino acids. In Zygosaccharomyces rouxii (strain ATCC 2623 / CBS 732 / NBRC 1130 / NCYC 568 / NRRL Y-229), this protein is Signal peptidase complex catalytic subunit SEC11 (SEC11).